We begin with the raw amino-acid sequence, 502 residues long: Bifunctional purine biosynthesis protein PurH (502 aa).

An MGS-like domain is found at Met-1–Ser-144.

Belongs to the PurH family.

It carries out the reaction (6R)-10-formyltetrahydrofolate + 5-amino-1-(5-phospho-beta-D-ribosyl)imidazole-4-carboxamide = 5-formamido-1-(5-phospho-D-ribosyl)imidazole-4-carboxamide + (6S)-5,6,7,8-tetrahydrofolate. The enzyme catalyses IMP + H2O = 5-formamido-1-(5-phospho-D-ribosyl)imidazole-4-carboxamide. Its pathway is purine metabolism; IMP biosynthesis via de novo pathway; 5-formamido-1-(5-phospho-D-ribosyl)imidazole-4-carboxamide from 5-amino-1-(5-phospho-D-ribosyl)imidazole-4-carboxamide (10-formyl THF route): step 1/1. The protein operates within purine metabolism; IMP biosynthesis via de novo pathway; IMP from 5-formamido-1-(5-phospho-D-ribosyl)imidazole-4-carboxamide: step 1/1. The sequence is that of Bifunctional purine biosynthesis protein PurH from Clostridium beijerinckii (strain ATCC 51743 / NCIMB 8052) (Clostridium acetobutylicum).